The sequence spans 330 residues: Glucokinase (330 aa).

Position 14 to 19 (14 to 19 (ADIGGT)) interacts with ATP.

Belongs to the bacterial glucokinase family.

Its subcellular location is the cytoplasm. It catalyses the reaction D-glucose + ATP = D-glucose 6-phosphate + ADP + H(+). The polypeptide is Glucokinase (Colwellia psychrerythraea (strain 34H / ATCC BAA-681) (Vibrio psychroerythus)).